The chain runs to 542 residues: CTP synthase (542 aa).

An amidoligase domain region spans residues 1 to 265; it reads MTRYIFVTGG…DDFVVERFGL (265 aa). Serine 13 is a binding site for CTP. Residue serine 13 participates in UTP binding. ATP is bound by residues 14–19 and aspartate 71; that span reads SLGKGI. Mg(2+)-binding residues include aspartate 71 and glutamate 139. Residues 146–148, 186–191, and lysine 222 contribute to the CTP site; these read DIE and KTKPTQ. UTP contacts are provided by residues 186–191 and lysine 222; that span reads KTKPTQ. Positions 290–541 constitute a Glutamine amidotransferase type-1 domain; the sequence is TIAMVGKYME…VKAALAQKNK (252 aa). Glycine 351 provides a ligand contact to L-glutamine. Cysteine 378 functions as the Nucleophile; for glutamine hydrolysis in the catalytic mechanism. Residues 379-382, glutamate 402, and arginine 469 each bind L-glutamine; that span reads LGMQ. Residues histidine 514 and glutamate 516 contribute to the active site.

It belongs to the CTP synthase family. Homotetramer.

The enzyme catalyses UTP + L-glutamine + ATP + H2O = CTP + L-glutamate + ADP + phosphate + 2 H(+). The catalysed reaction is L-glutamine + H2O = L-glutamate + NH4(+). It carries out the reaction UTP + NH4(+) + ATP = CTP + ADP + phosphate + 2 H(+). Its pathway is pyrimidine metabolism; CTP biosynthesis via de novo pathway; CTP from UDP: step 2/2. Allosterically activated by GTP, when glutamine is the substrate; GTP has no effect on the reaction when ammonia is the substrate. The allosteric effector GTP functions by stabilizing the protein conformation that binds the tetrahedral intermediate(s) formed during glutamine hydrolysis. Inhibited by the product CTP, via allosteric rather than competitive inhibition. Catalyzes the ATP-dependent amination of UTP to CTP with either L-glutamine or ammonia as the source of nitrogen. Regulates intracellular CTP levels through interactions with the four ribonucleotide triphosphates. This is CTP synthase from Pseudomonas putida (strain ATCC 700007 / DSM 6899 / JCM 31910 / BCRC 17059 / LMG 24140 / F1).